The sequence spans 60 residues: Large ribosomal subunit protein uL30 (60 aa).

It belongs to the universal ribosomal protein uL30 family. Part of the 50S ribosomal subunit.

This Cupriavidus necator (strain ATCC 17699 / DSM 428 / KCTC 22496 / NCIMB 10442 / H16 / Stanier 337) (Ralstonia eutropha) protein is Large ribosomal subunit protein uL30.